The following is a 435-amino-acid chain: ATP-dependent protease ATPase subunit HslU (435 aa).

ATP-binding positions include I18, 60–65 (GVGKTE), D248, E313, and R385.

This sequence belongs to the ClpX chaperone family. HslU subfamily. A double ring-shaped homohexamer of HslV is capped on each side by a ring-shaped HslU homohexamer. The assembly of the HslU/HslV complex is dependent on binding of ATP.

It localises to the cytoplasm. ATPase subunit of a proteasome-like degradation complex; this subunit has chaperone activity. The binding of ATP and its subsequent hydrolysis by HslU are essential for unfolding of protein substrates subsequently hydrolyzed by HslV. HslU recognizes the N-terminal part of its protein substrates and unfolds these before they are guided to HslV for hydrolysis. In Rhizobium leguminosarum bv. trifolii (strain WSM2304), this protein is ATP-dependent protease ATPase subunit HslU.